The chain runs to 309 residues: GATA transcription factor 25 (309 aa).

A disordered region spans residues 1–35 (MFGRHSIIPNNQIGTASASAGEDHVSASATSGHIP). The span at 8–18 (IPNNQIGTASA) shows a compositional bias: polar residues. In terms of domain architecture, Tify spans 77–112 (PPEGANQLTISFRGQVYVFDAVGADKVDAVLSLLGG). Residues 146 to 188 (RAQSLDRFRKKRNARCFEKKVRYGVRQEVALRMARNKGQFTSS) form the CCT domain. Residues 187–202 (SSKMTDGAYNSGTDQD) are compositionally biased toward polar residues. The segment at 187–207 (SSKMTDGAYNSGTDQDSAQDD) is disordered. The GATA-type zinc-finger motif lies at 208–267 (AHPEISCTHCGISSKCTPMMRRGPSGPRTLCNACGLFWANRGTLRDLSKKTEENQLALMK). Positions 290–309 (EHTSMVSLANGDNSNLLGDH) are disordered. Positions 293–309 (SMVSLANGDNSNLLGDH) are enriched in polar residues.

It belongs to the type IV zinc-finger family. Class C subfamily. In terms of tissue distribution, predominantly expressed in shoot apices, inflorescences and roots.

It localises to the nucleus. Functionally, transcriptional activator that specifically binds 5'-GATA-3' or 5'-GAT-3' motifs within gene promoters. This Arabidopsis thaliana (Mouse-ear cress) protein is GATA transcription factor 25 (GATA25).